The following is a 495-amino-acid chain: Ectonucleoside triphosphate diphosphohydrolase 8 (495 aa).

Topologically, residues 1-8 (MGLSRKEQ) are cytoplasmic. A helical transmembrane segment spans residues 9–29 (VFLALLGASGVSGLTALILLL). At 30–471 (VEATSVLLPT…AESYGVWVAK (442 aa)) the chain is on the extracellular side. Asn-67 is a glycosylation site (N-linked (GlcNAc...) asparagine). Cys-78 and Cys-102 are joined by a disulfide. Glu-168 (proton acceptor) is an active-site residue. A disulfide bridge links Cys-246 with Cys-292. A glycan (N-linked (GlcNAc...) asparagine) is linked at Asn-304. Cys-329 and Cys-335 are disulfide-bonded. N-linked (GlcNAc...) asparagine glycosylation is present at Asn-363. Cys-381 and Cys-403 are joined by a disulfide. Residues 472–492 (VVFMVLALVAVVGAALVQLFW) traverse the membrane as a helical segment. Residues 493 to 495 (LQD) are Cytoplasmic-facing.

Belongs to the GDA1/CD39 NTPase family. It depends on Ca(2+) as a cofactor. The cofactor is Mg(2+). Post-translationally, N-glycosylated.

It is found in the cell membrane. It carries out the reaction a ribonucleoside 5'-triphosphate + 2 H2O = a ribonucleoside 5'-phosphate + 2 phosphate + 2 H(+). With respect to regulation, not inhibited by ARL 67156. In terms of biological role, canalicular ectonucleoside NTPDase responsible for the main hepatic NTPDase activity. Ectonucleoside NTPDases catalyze the hydrolysis of gamma- and beta-phosphate residues of nucleotides, playing a central role in concentration of extracellular nucleotides. Has activity toward ATP, ADP, UTP and UDP, but not toward AMP. The polypeptide is Ectonucleoside triphosphate diphosphohydrolase 8 (ENTPD8) (Homo sapiens (Human)).